Consider the following 125-residue polypeptide: MEYQFTHSIHGIVAKCSMEHEVFARWLNTEIIGHTQNLHNILAEIEKCRAAFPNHYECVFEGQEYSLYFDCDEVIVKVNNLAMAIDEVIVEEGLQLYDQESVAFCGLEDFERFLQAYHKFSSTYH.

Belongs to the UPF0231 family.

In Haemophilus ducreyi (strain 35000HP / ATCC 700724), this protein is UPF0231 protein HD_1708.